A 444-amino-acid polypeptide reads, in one-letter code: GTPase Der (444 aa).

2 consecutive EngA-type G domains span residues 2–167 (LKVA…LKEI) and 173–349 (FKFC…ENLN). GTP contacts are provided by residues 8 to 15 (GKPNVGKS), 55 to 59 (DTGGL), 118 to 121 (NKSE), 179 to 186 (GRPNVGKS), 226 to 230 (DTAGI), and 291 to 294 (NKWD). The KH-like domain maps to 350 to 434 (LKFNSKILTD…PITLYFKNKT (85 aa)).

Belongs to the TRAFAC class TrmE-Era-EngA-EngB-Septin-like GTPase superfamily. EngA (Der) GTPase family. As to quaternary structure, associates with the 50S ribosomal subunit.

In terms of biological role, GTPase that plays an essential role in the late steps of ribosome biogenesis. The polypeptide is GTPase Der (Malacoplasma penetrans (strain HF-2) (Mycoplasma penetrans)).